Reading from the N-terminus, the 394-residue chain is 1-deoxy-D-xylulose 5-phosphate reductoisomerase (394 aa).

T10, G11, S12, I13, G38, R39, N40, and N123 together coordinate NADPH. K124 contributes to the 1-deoxy-D-xylulose 5-phosphate binding site. E125 is an NADPH binding site. A Mn(2+)-binding site is contributed by D149. 1-deoxy-D-xylulose 5-phosphate contacts are provided by S150, E151, S175, and H198. E151 contributes to the Mn(2+) binding site. G204 contacts NADPH. Positions 211, 216, 217, and 220 each coordinate 1-deoxy-D-xylulose 5-phosphate. E220 serves as a coordination point for Mn(2+).

This sequence belongs to the DXR family. Requires Mg(2+) as cofactor. Mn(2+) is required as a cofactor.

The catalysed reaction is 2-C-methyl-D-erythritol 4-phosphate + NADP(+) = 1-deoxy-D-xylulose 5-phosphate + NADPH + H(+). The protein operates within isoprenoid biosynthesis; isopentenyl diphosphate biosynthesis via DXP pathway; isopentenyl diphosphate from 1-deoxy-D-xylulose 5-phosphate: step 1/6. Functionally, catalyzes the NADPH-dependent rearrangement and reduction of 1-deoxy-D-xylulose-5-phosphate (DXP) to 2-C-methyl-D-erythritol 4-phosphate (MEP). The chain is 1-deoxy-D-xylulose 5-phosphate reductoisomerase from Cereibacter sphaeroides (strain ATCC 17025 / ATH 2.4.3) (Rhodobacter sphaeroides).